Consider the following 476-residue polypeptide: Acyl-lipid omega-13 desaturase (476 aa).

One can recognise a Cytochrome b5 heme-binding domain in the interval 10-75 (GPALPSIPHQ…HLRVLERFRV (66 aa)). Residues His-37 and His-60 each coordinate heme. 2 helical membrane passes run 146–166 (PFVI…KLWW) and 168–188 (GAFI…AAMV). The Histidine box-1 motif lies at 189–193 (HDGGH). The Histidine box-2 signature appears at 224–229 (HNILHH). 3 consecutive transmembrane segments (helical) span residues 267-287 (FFSH…ISPL), 315-335 (YHST…TPFL), and 343-363 (LLLT…IAQV). The Histidine box-3 motif lies at 410–414 (QSLHH).

Belongs to the fatty acid desaturase type 1 family.

The protein localises to the membrane. It carries out the reaction a (9Z,12Z)-octadecadienoyl-containing glycerolipid + 2 Fe(II)-[cytochrome b5] + O2 + 2 H(+) = a (5Z,9Z,12Z)-octadecatrienoyl-containing glycerolipid + 2 Fe(III)-[cytochrome b5] + 2 H2O. The catalysed reaction is (9Z,12Z,15Z)-octadecatrienoyl-containing glycerolipid + 2 Fe(II)-[cytochrome b5] + O2 + 2 H(+) = a (5Z,9Z,12Z,15Z)-octadecatetraenoyl-containing glycerolipid + 2 Fe(III)-[cytochrome b5] + 2 H2O. The protein operates within lipid metabolism; polyunsaturated fatty acid biosynthesis. In terms of biological role, front-end desaturase having a omega-13 desaturase activity for omega-9 unsaturated C18/C20 fatty acids. Strong substrate preferences for linoleic acid and alpha-linolenic acid for the production of pinolenic and coniferonic acids respectively. No desaturase activity for dihomo gamma-linolenic acid and eicosatertraenoic acid. The polypeptide is Acyl-lipid omega-13 desaturase (Chlamydomonas reinhardtii (Chlamydomonas smithii)).